A 152-amino-acid polypeptide reads, in one-letter code: Deoxyuridine 5'-triphosphate nucleotidohydrolase (152 aa).

Substrate-binding positions include 71-73 (RSG), N84, 88-90 (LID), and M98.

The protein belongs to the dUTPase family. Mg(2+) serves as cofactor.

The enzyme catalyses dUTP + H2O = dUMP + diphosphate + H(+). The protein operates within pyrimidine metabolism; dUMP biosynthesis; dUMP from dCTP (dUTP route): step 2/2. This enzyme is involved in nucleotide metabolism: it produces dUMP, the immediate precursor of thymidine nucleotides and it decreases the intracellular concentration of dUTP so that uracil cannot be incorporated into DNA. The polypeptide is Deoxyuridine 5'-triphosphate nucleotidohydrolase (Shewanella woodyi (strain ATCC 51908 / MS32)).